The primary structure comprises 350 residues: Probable dual-specificity RNA methyltransferase RlmN (350 aa).

Glu-91 functions as the Proton acceptor in the catalytic mechanism. In terms of domain architecture, Radical SAM core spans 97 to 327; that stretch reads YHHGNSVCIS…VTIRREMGRD (231 aa). A disulfide bridge links Cys-104 with Cys-332. Cys-111, Cys-115, and Cys-118 together coordinate [4Fe-4S] cluster. S-adenosyl-L-methionine contacts are provided by residues 158–159, Ser-190, 213–215, and Asn-289; these read GE and SLH. Catalysis depends on Cys-332, which acts as the S-methylcysteine intermediate.

This sequence belongs to the radical SAM superfamily. RlmN family. It depends on [4Fe-4S] cluster as a cofactor.

The protein resides in the cytoplasm. The catalysed reaction is adenosine(2503) in 23S rRNA + 2 reduced [2Fe-2S]-[ferredoxin] + 2 S-adenosyl-L-methionine = 2-methyladenosine(2503) in 23S rRNA + 5'-deoxyadenosine + L-methionine + 2 oxidized [2Fe-2S]-[ferredoxin] + S-adenosyl-L-homocysteine. The enzyme catalyses adenosine(37) in tRNA + 2 reduced [2Fe-2S]-[ferredoxin] + 2 S-adenosyl-L-methionine = 2-methyladenosine(37) in tRNA + 5'-deoxyadenosine + L-methionine + 2 oxidized [2Fe-2S]-[ferredoxin] + S-adenosyl-L-homocysteine. Its function is as follows. Specifically methylates position 2 of adenine 2503 in 23S rRNA and position 2 of adenine 37 in tRNAs. The sequence is that of Probable dual-specificity RNA methyltransferase RlmN from Lachnospira eligens (strain ATCC 27750 / DSM 3376 / VPI C15-48 / C15-B4) (Eubacterium eligens).